The chain runs to 366 residues: Ribosomal RNA large subunit methyltransferase M (366 aa).

Residues Ser-188, 221-224 (CPGG), Asp-240, Asp-260, and Asp-277 each bind S-adenosyl-L-methionine. Catalysis depends on Lys-306, which acts as the Proton acceptor.

This sequence belongs to the class I-like SAM-binding methyltransferase superfamily. RNA methyltransferase RlmE family. RlmM subfamily. Monomer.

Its subcellular location is the cytoplasm. The catalysed reaction is cytidine(2498) in 23S rRNA + S-adenosyl-L-methionine = 2'-O-methylcytidine(2498) in 23S rRNA + S-adenosyl-L-homocysteine + H(+). Functionally, catalyzes the 2'-O-methylation at nucleotide C2498 in 23S rRNA. The protein is Ribosomal RNA large subunit methyltransferase M of Pectobacterium carotovorum subsp. carotovorum (strain PC1).